The sequence spans 436 residues: MGQVLPLVTRQGDRIAIVSGLRTPFARQATAFHGIPAGDLGKMVVGELLARTEIPAEVIEQLVFGQVVQMPEAPNIAREIVLGTGMNVHTDAYSVSRACATSFQAVANVAESLMAGTIRAGIAGGADSSSVLPIGVSKKLARVLVDVNKARTMSQRLKLFSRLRLRDLMPVPPAVAEYSTGLRMGDTAEQMAKTYGITREQQDALAHRSHQRAAQAWSEGKLKEEVMTAFIPPYKQPLVEDNNIRGNSSLADYAKLRPAFDRKHGTVTAANSTPLTDGAAAVILMTESRAKELGLVPLGYLRSYAFTAIDVWQDMLLGPAWSTPLALERAGLTMSDLTLIDMHEAFAAQTLANIQLLGSERFARDVLGRAHATGEVDDSKFNVLGGSIAYGHPFAATGARMITQTLHELRRRGGGFGLVTACAAGGLGAAMVLEAE.

The Acyl-thioester intermediate role is filled by Cys99. Catalysis depends on proton acceptor residues His392 and Cys422.

Belongs to the thiolase-like superfamily. Thiolase family. As to quaternary structure, heterotetramer of two alpha chains (FadJ) and two beta chains (FadI).

The protein localises to the cytoplasm. It catalyses the reaction an acyl-CoA + acetyl-CoA = a 3-oxoacyl-CoA + CoA. Its pathway is lipid metabolism; fatty acid beta-oxidation. Functionally, catalyzes the final step of fatty acid oxidation in which acetyl-CoA is released and the CoA ester of a fatty acid two carbons shorter is formed. The polypeptide is 3-ketoacyl-CoA thiolase (Escherichia coli O127:H6 (strain E2348/69 / EPEC)).